A 235-amino-acid polypeptide reads, in one-letter code: Serine protease SplA (235 aa).

The first 35 residues, 1-35 (MNKNVMVKGLTALTILTSLGFAENISNQPHSIAKA), serve as a signal peptide directing secretion. Active-site charge relay system residues include His-74, Asp-113, and Ser-189.

The protein belongs to the peptidase S1B family.

It is found in the secreted. This Staphylococcus aureus (strain Mu3 / ATCC 700698) protein is Serine protease SplA (splA).